Here is a 210-residue protein sequence, read N- to C-terminus: Putative 3-methyladenine DNA glycosylase (210 aa).

Residues 180-210 (SRPPPGAAAARAARAPAAPAPRPRRPRGSGP) form a disordered region. Residues 186-196 (AAAARAARAPA) are compositionally biased toward low complexity. Residues 201 to 210 (RPRRPRGSGP) are compositionally biased toward basic residues.

The protein belongs to the DNA glycosylase MPG family.

The chain is Putative 3-methyladenine DNA glycosylase from Anaeromyxobacter dehalogenans (strain 2CP-1 / ATCC BAA-258).